We begin with the raw amino-acid sequence, 223 residues long: 7-cyano-7-deazaguanine synthase (223 aa).

8–18 (LSGGLDSATTL) contacts ATP. Residues C187, C197, C200, and C203 each contribute to the Zn(2+) site.

It belongs to the QueC family. Zn(2+) is required as a cofactor.

It catalyses the reaction 7-carboxy-7-deazaguanine + NH4(+) + ATP = 7-cyano-7-deazaguanine + ADP + phosphate + H2O + H(+). The protein operates within purine metabolism; 7-cyano-7-deazaguanine biosynthesis. Functionally, catalyzes the ATP-dependent conversion of 7-carboxy-7-deazaguanine (CDG) to 7-cyano-7-deazaguanine (preQ(0)). In Methylococcus capsulatus (strain ATCC 33009 / NCIMB 11132 / Bath), this protein is 7-cyano-7-deazaguanine synthase.